The chain runs to 146 residues: DNA-directed RNA polymerases II, IV and V subunit 8B (146 aa).

The protein belongs to the eukaryotic RPB8 RNA polymerase subunit family. In terms of assembly, component of the RNA polymerase II, IV and V complexes. Associates with the mediator complex.

The protein localises to the nucleus. Functionally, DNA-dependent RNA polymerase catalyzes the transcription of DNA into RNA using the four ribonucleoside triphosphates as substrates. Component of RNA polymerase II which synthesizes mRNA precursors and many functional non-coding RNAs. Pol II is the central component of the basal RNA polymerase II transcription machinery. It is composed of mobile elements that move relative to each other. Component of RNA polymerases IV and V which mediate short-interfering RNAs (siRNA) accumulation and subsequent RNA-directed DNA methylation-dependent (RdDM) transcriptional gene silencing (TGS) of endogenous repeated sequences, including transposable elements. In Arabidopsis thaliana (Mouse-ear cress), this protein is DNA-directed RNA polymerases II, IV and V subunit 8B (NRPB8B).